Here is a 330-residue protein sequence, read N- to C-terminus: Phosphate acyltransferase (330 aa).

The protein belongs to the PlsX family. In terms of assembly, homodimer. Probably interacts with PlsY.

Its subcellular location is the cytoplasm. It carries out the reaction a fatty acyl-[ACP] + phosphate = an acyl phosphate + holo-[ACP]. It functions in the pathway lipid metabolism; phospholipid metabolism. In terms of biological role, catalyzes the reversible formation of acyl-phosphate (acyl-PO(4)) from acyl-[acyl-carrier-protein] (acyl-ACP). This enzyme utilizes acyl-ACP as fatty acyl donor, but not acyl-CoA. The sequence is that of Phosphate acyltransferase from Bacillus anthracis (strain A0248).